The primary structure comprises 201 residues: dCTP deaminase, dUMP-forming (201 aa).

Residues 101–106 (KSSLGR), Asp119, 127–129 (TLE), Gln148, Tyr162, and Gln174 contribute to the dCTP site. Glu129 functions as the Proton donor/acceptor in the catalytic mechanism.

It belongs to the dCTP deaminase family. In terms of assembly, homotrimer.

The enzyme catalyses dCTP + 2 H2O = dUMP + NH4(+) + diphosphate. The protein operates within pyrimidine metabolism; dUMP biosynthesis; dUMP from dCTP: step 1/1. In terms of biological role, bifunctional enzyme that catalyzes both the deamination of dCTP to dUTP and the hydrolysis of dUTP to dUMP without releasing the toxic dUTP intermediate. In Parafrankia sp. (strain EAN1pec), this protein is dCTP deaminase, dUMP-forming.